A 456-amino-acid polypeptide reads, in one-letter code: Bis(5'-adenosyl)-triphosphatase enpp4 (456 aa).

An N-terminal signal peptide occupies residues 1-18 (MFNMKILVIPLFWGLVTG). Residues 19 to 410 (YKGNSSDSSA…DQWCINLPEA (392 aa)) are Extracellular-facing. Zn(2+) is bound by residues Asp37 and Thr73. Residue Thr73 is the AMP-threonine intermediate of the active site. A substrate-binding site is contributed by Asn94. A glycan (N-linked (GlcNAc...) asparagine) is linked at Asn148. Residue Tyr157 coordinates substrate. N-linked (GlcNAc...) asparagine glycosylation occurs at Asn169. Zn(2+) contacts are provided by Asp192, His196, Asp240, and His241. A substrate-binding site is contributed by Asp192. An intrachain disulfide couples Cys257 to Cys290. N-linked (GlcNAc...) asparagine glycans are attached at residues Asn279 and Asn330. Residue His339 participates in Zn(2+) binding. Asn389 carries an N-linked (GlcNAc...) asparagine glycan. A disulfide bond links Cys397 and Cys404. Residues 411–431 (IGIVVSALLVLTMLTGLMIFM) traverse the membrane as a helical segment. At 432–456 (RSRASTSRPFSRLQLQEDDDDPLID) the chain is on the cytoplasmic side.

It belongs to the nucleotide pyrophosphatase/phosphodiesterase family. It depends on Zn(2+) as a cofactor.

Its subcellular location is the cell membrane. The catalysed reaction is P(1),P(3)-bis(5'-adenosyl) triphosphate + H2O = AMP + ADP + 2 H(+). In terms of biological role, hydrolyzes extracellular Ap3A into AMP and ADP, and Ap4A into AMP and ATP. Ap3A and Ap4A are diadenosine polyphosphates thought to induce proliferation of vascular smooth muscle cells. Acts as a procoagulant, mediating platelet aggregation at the site of nascent thrombus via release of ADP from Ap3A and activation of ADP receptors. This is Bis(5'-adenosyl)-triphosphatase enpp4 (Enpp4) from Mus musculus (Mouse).